A 157-amino-acid polypeptide reads, in one-letter code: uncharacterized protein (157 aa).

The stretch at 36 to 63 forms a coiled coil; it reads QIEELNELCQFFNISLTYTRESLEELEN.

This is an uncharacterized protein from Bacillus subtilis (strain 168).